A 229-amino-acid polypeptide reads, in one-letter code: Ribonuclease T (229 aa).

The Exonuclease domain maps to 23 to 197 (VIIDVETAGF…YDTERTAKLF (175 aa)). D26, E28, H184, and D189 together coordinate Mg(2+). H184 acts as the Proton donor/acceptor in catalysis.

This sequence belongs to the RNase T family. In terms of assembly, homodimer. The cofactor is Mg(2+).

In terms of biological role, trims short 3' overhangs of a variety of RNA species, leaving a one or two nucleotide 3' overhang. Responsible for the end-turnover of tRNA: specifically removes the terminal AMP residue from uncharged tRNA (tRNA-C-C-A). Also appears to be involved in tRNA biosynthesis. The sequence is that of Ribonuclease T from Haemophilus influenzae (strain ATCC 51907 / DSM 11121 / KW20 / Rd).